Reading from the N-terminus, the 261-residue chain is High-affinity zinc uptake system membrane protein ZnuB (261 aa).

7 consecutive transmembrane segments (helical) span residues 8–28 (ALLTGIVLSLITAPLGVFVVW), 54–74 (VNPYIAIVVLTLILAIAMVWL), 84–104 (TLLGIIAHSCLSLGVVTVGLL), 125–145 (TDLIYIGIGVIIVLSTLIYFW), 171–191 (ILMILTALTIALSMKFVGALI), 214–234 (VGWAIIMSMLSIIGGLILSAF), and 236–256 (DTAAGPSVVICSAFLFVLSLF).

It belongs to the ABC-3 integral membrane protein family.

Its subcellular location is the cell inner membrane. Involved in the high-affinity zinc uptake transport system. The polypeptide is High-affinity zinc uptake system membrane protein ZnuB (znuB) (Haemophilus influenzae (strain ATCC 51907 / DSM 11121 / KW20 / Rd)).